Here is a 30-residue protein sequence, read N- to C-terminus: GWRDWLNKGKEWLKKKGPGMVKAALAAATQ.

Belongs to the ponericin-G family. As to expression, expressed by the venom gland.

Its subcellular location is the secreted. Its function is as follows. Shows a broad spectrum of activity against both Gram-positive and Gram-negative bacteria. Also has antimicrobial activity against S.cerevisiae. Has insecticidal and non-hemolytic activity. The sequence is that of U1-poneritoxin-Ni3a from Neoponera inversa (Ant).